The chain runs to 56 residues: Ovomucoid (56 aa).

One can recognise a Kazal-like domain in the interval 6 to 56; sequence VDCSDHPKPACLQEQKPLCGSDNKTYDNKCSFCNAVVDSNGTLTLSHFGKC. 3 disulfide bridges follow: Cys-8/Cys-38, Cys-16/Cys-35, and Cys-24/Cys-56. N-linked (GlcNAc...) asparagine glycosylation occurs at Asn-45.

The protein localises to the secreted. The sequence is that of Ovomucoid from Penelope jacquacu (Spix's guan).